We begin with the raw amino-acid sequence, 423 residues long: Glutamyl-tRNA reductase (423 aa).

Substrate contacts are provided by residues 49 to 52, serine 109, 114 to 116, and glutamine 120; these read TCNR and EGQ. Cysteine 50 functions as the Nucleophile in the catalytic mechanism. Residue 189-194 coordinates NADP(+); it reads GAGETG.

Belongs to the glutamyl-tRNA reductase family. As to quaternary structure, homodimer.

The enzyme catalyses (S)-4-amino-5-oxopentanoate + tRNA(Glu) + NADP(+) = L-glutamyl-tRNA(Glu) + NADPH + H(+). It participates in porphyrin-containing compound metabolism; protoporphyrin-IX biosynthesis; 5-aminolevulinate from L-glutamyl-tRNA(Glu): step 1/2. Its pathway is porphyrin-containing compound metabolism; chlorophyll biosynthesis. In terms of biological role, catalyzes the NADPH-dependent reduction of glutamyl-tRNA(Glu) to glutamate 1-semialdehyde (GSA). This is Glutamyl-tRNA reductase from Chlorobium limicola (strain DSM 245 / NBRC 103803 / 6330).